We begin with the raw amino-acid sequence, 211 residues long: Acyl-homoserine-lactone synthase (211 aa).

The protein belongs to the autoinducer synthase family.

The catalysed reaction is a fatty acyl-[ACP] + S-adenosyl-L-methionine = an N-acyl-L-homoserine lactone + S-methyl-5'-thioadenosine + holo-[ACP] + H(+). Required for the synthesis of OHHL (N-(3-oxohexanoyl)-L-homoserine lactone), an autoinducer molecule which binds to TraR and thus acts in the control of conjugal transfer. The chain is Acyl-homoserine-lactone synthase (traI) from Agrobacterium fabrum (strain C58 / ATCC 33970) (Agrobacterium tumefaciens (strain C58)).